Consider the following 255-residue polypeptide: MPYLYRIAYDGTLFYGFTGHSRSLEPALKRVFGEILGRGSRTDPGVSAVANTVMVSQKLPIALVNSKLPRGVWAWAIAEVPQSFNPRRAKFRHYLYVAPHWGEDLGSMHEAAEVLAGTHDFASFIQRRGEKISTIATVMEIKVELRGDLIYMHFVGRGFKNKMIRKLAWAILAAGRGIFNIRDIRELLERPRPGVVPSAPAEGLVLLNIEYDVDFQIDYTALRSAYVYFLSKYRHAVAHAAALKAVGETLATWEQ.

Asp-43 (nucleophile) is an active-site residue. Tyr-94 contacts substrate.

It belongs to the tRNA pseudouridine synthase TruA family.

The catalysed reaction is uridine(38/39/40) in tRNA = pseudouridine(38/39/40) in tRNA. Formation of pseudouridine at positions 38, 39 and 40 in the anticodon stem and loop of transfer RNAs. The chain is tRNA pseudouridine synthase A from Pyrobaculum islandicum (strain DSM 4184 / JCM 9189 / GEO3).